Reading from the N-terminus, the 449-residue chain is Probable magnetosome protein Mms48 (449 aa).

Positions methionine 1–alanine 18 are cleaved as a signal peptide. A helical membrane pass occupies residues serine 40 to serine 60. The stretch at proline 323 to alanine 356 is one TPR repeat.

It localises to the magnetosome membrane. In terms of biological role, overexpression in wild-type cells increases the number of cells with double magnetosome chains significantly. The 4 genes of this operon collectively influence magnetosome size and number. This chain is Probable magnetosome protein Mms48, found in Magnetospirillum gryphiswaldense (strain DSM 6361 / JCM 21280 / NBRC 15271 / MSR-1).